Reading from the N-terminus, the 393-residue chain is Fructose-bisphosphate aldolase 4, cytosolic (393 aa).

Substrate is bound at residue Arg73. Residue Cys207 is modified to S-glutathionyl cysteine; transient; alternate. The residue at position 207 (Cys207) is an S-nitrosocysteine; transient; alternate. The Proton acceptor role is filled by Glu217. The Schiff-base intermediate with dihydroxyacetone-P role is filled by Lys259. Substrate-binding positions include 301 to 303 (SGG) and Arg333.

It belongs to the class I fructose-bisphosphate aldolase family. Homotetramer. Post-translationally, S-glutathionylated at Cys-207. In terms of processing, S-nitrosylated at Cys-207. Highly expressed in flowers.

It localises to the cytoplasm. Its subcellular location is the cytosol. It carries out the reaction beta-D-fructose 1,6-bisphosphate = D-glyceraldehyde 3-phosphate + dihydroxyacetone phosphate. It participates in carbohydrate degradation; glycolysis; D-glyceraldehyde 3-phosphate and glycerone phosphate from D-glucose: step 4/4. In terms of biological role, fructose-bisphosphate aldolase that plays a key role in glycolysis and gluconeogenesis. The chain is Fructose-bisphosphate aldolase 4, cytosolic from Arabidopsis thaliana (Mouse-ear cress).